A 1023-amino-acid chain; its full sequence is FHIP family protein AGAP011705 (1023 aa).

3 stretches are compositionally biased toward polar residues: residues 1–13, 806–825, and 868–888; these read MSWL…RQSF, SMTS…SSSY, and GLNH…ASMN. Disordered regions lie at residues 1 to 39 and 797 to 927; these read MSWL…AGGG and GKLL…AETQ. A compositionally biased stretch (low complexity) spans 889 to 906; sequence VPSPVGQQQHQHQSVSSV.

The protein belongs to the FHIP family.

This Anopheles gambiae (African malaria mosquito) protein is FHIP family protein AGAP011705.